We begin with the raw amino-acid sequence, 400 residues long: Serine/threonine transporter SstT (400 aa).

A run of 9 helical transmembrane segments spans residues 9–29 (LVTQ…VWPA), 36–56 (ILGS…VFVL), 75–95 (VLVL…VASM), 134–154 (ALLE…GLAL), 175–195 (VIQL…ASTF), 209–229 (LLAV…PLIV), 281–301 (IAIP…ISVL), 323–343 (VVAS…LLLI), and 349–369 (LFGI…IIGI).

This sequence belongs to the dicarboxylate/amino acid:cation symporter (DAACS) (TC 2.A.23) family.

Its subcellular location is the cell inner membrane. The catalysed reaction is L-serine(in) + Na(+)(in) = L-serine(out) + Na(+)(out). It carries out the reaction L-threonine(in) + Na(+)(in) = L-threonine(out) + Na(+)(out). Functionally, involved in the import of serine and threonine into the cell, with the concomitant import of sodium (symport system). This Acidovorax sp. (strain JS42) protein is Serine/threonine transporter SstT.